A 393-amino-acid chain; its full sequence is Phosphopentomutase (393 aa).

Residues D14, D287, H292, D328, H329, and H340 each coordinate Mn(2+).

Belongs to the phosphopentomutase family. It depends on Mn(2+) as a cofactor.

It localises to the cytoplasm. The enzyme catalyses 2-deoxy-alpha-D-ribose 1-phosphate = 2-deoxy-D-ribose 5-phosphate. The catalysed reaction is alpha-D-ribose 1-phosphate = D-ribose 5-phosphate. It participates in carbohydrate degradation; 2-deoxy-D-ribose 1-phosphate degradation; D-glyceraldehyde 3-phosphate and acetaldehyde from 2-deoxy-alpha-D-ribose 1-phosphate: step 1/2. Isomerase that catalyzes the conversion of deoxy-ribose 1-phosphate (dRib-1-P) and ribose 1-phosphate (Rib-1-P) to deoxy-ribose 5-phosphate (dRib-5-P) and ribose 5-phosphate (Rib-5-P), respectively. This Geobacillus stearothermophilus (Bacillus stearothermophilus) protein is Phosphopentomutase.